The primary structure comprises 317 residues: Malate dehydrogenase (317 aa).

Residues 13–18 (GAGNIG) and Asp38 each bind NAD(+). The substrate site is built by Arg87 and Arg93. NAD(+) is bound by residues Asn100 and 123-125 (VTN). Residues Asn125 and Arg156 each contribute to the substrate site. His180 serves as the catalytic Proton acceptor.

Belongs to the LDH/MDH superfamily. MDH type 3 family.

The enzyme catalyses (S)-malate + NAD(+) = oxaloacetate + NADH + H(+). Its function is as follows. Catalyzes the reversible oxidation of malate to oxaloacetate. The protein is Malate dehydrogenase of Anaplasma marginale (strain St. Maries).